Here is a 425-residue protein sequence, read N- to C-terminus: Phosphomethylpyrimidine synthase (425 aa).

Residues methionine 94, tyrosine 123, histidine 162, 184-186 (SRG), 225-228 (NGMR), and glutamate 264 contribute to the substrate site. Histidine 268 serves as a coordination point for Zn(2+). Position 291 (tyrosine 291) interacts with substrate. A Zn(2+)-binding site is contributed by histidine 332. Cysteine 407, cysteine 410, and cysteine 414 together coordinate [4Fe-4S] cluster.

It belongs to the ThiC family. The cofactor is [4Fe-4S] cluster.

The enzyme catalyses 5-amino-1-(5-phospho-beta-D-ribosyl)imidazole + S-adenosyl-L-methionine = 4-amino-2-methyl-5-(phosphooxymethyl)pyrimidine + CO + 5'-deoxyadenosine + formate + L-methionine + 3 H(+). It functions in the pathway cofactor biosynthesis; thiamine diphosphate biosynthesis. Catalyzes the synthesis of the hydroxymethylpyrimidine phosphate (HMP-P) moiety of thiamine from aminoimidazole ribotide (AIR) in a radical S-adenosyl-L-methionine (SAM)-dependent reaction. This Methanoregula boonei (strain DSM 21154 / JCM 14090 / 6A8) protein is Phosphomethylpyrimidine synthase.